Reading from the N-terminus, the 364-residue chain is 3-dehydroquinate synthase (364 aa).

NAD(+) is bound by residues 75 to 80 (DGEQYK), 109 to 113 (GVIGD), 133 to 134 (TT), K146, K155, and 173 to 176 (TLDT). Positions 188, 251, and 268 each coordinate Zn(2+).

It belongs to the sugar phosphate cyclases superfamily. Dehydroquinate synthase family. Co(2+) is required as a cofactor. Requires Zn(2+) as cofactor. NAD(+) serves as cofactor.

It localises to the cytoplasm. It catalyses the reaction 7-phospho-2-dehydro-3-deoxy-D-arabino-heptonate = 3-dehydroquinate + phosphate. Its pathway is metabolic intermediate biosynthesis; chorismate biosynthesis; chorismate from D-erythrose 4-phosphate and phosphoenolpyruvate: step 2/7. Its function is as follows. Catalyzes the conversion of 3-deoxy-D-arabino-heptulosonate 7-phosphate (DAHP) to dehydroquinate (DHQ). This is 3-dehydroquinate synthase from Dechloromonas aromatica (strain RCB).